A 171-amino-acid chain; its full sequence is Co-chaperone protein HscB homolog (171 aa).

Residues 2-74 enclose the J domain; the sequence is NHFELFGLPS…ISRAEYILAE (73 aa).

It belongs to the HscB family. Interacts with HscA and stimulates its ATPase activity.

In terms of biological role, co-chaperone involved in the maturation of iron-sulfur cluster-containing proteins. Seems to help targeting proteins to be folded toward HscA. The polypeptide is Co-chaperone protein HscB homolog (Vibrio parahaemolyticus serotype O3:K6 (strain RIMD 2210633)).